A 263-amino-acid chain; its full sequence is Ubiquinone/menaquinone biosynthesis C-methyltransferase UbiE (263 aa).

Residues T86, D107, and S152 each coordinate S-adenosyl-L-methionine.

The protein belongs to the class I-like SAM-binding methyltransferase superfamily. MenG/UbiE family.

It carries out the reaction a 2-demethylmenaquinol + S-adenosyl-L-methionine = a menaquinol + S-adenosyl-L-homocysteine + H(+). It catalyses the reaction a 2-methoxy-6-(all-trans-polyprenyl)benzene-1,4-diol + S-adenosyl-L-methionine = a 5-methoxy-2-methyl-3-(all-trans-polyprenyl)benzene-1,4-diol + S-adenosyl-L-homocysteine + H(+). It functions in the pathway quinol/quinone metabolism; menaquinone biosynthesis; menaquinol from 1,4-dihydroxy-2-naphthoate: step 2/2. Its pathway is cofactor biosynthesis; ubiquinone biosynthesis. Methyltransferase required for the conversion of demethylmenaquinol (DMKH2) to menaquinol (MKH2) and the conversion of 2-polyprenyl-6-methoxy-1,4-benzoquinol (DDMQH2) to 2-polyprenyl-3-methyl-6-methoxy-1,4-benzoquinol (DMQH2). The protein is Ubiquinone/menaquinone biosynthesis C-methyltransferase UbiE of Brucella anthropi (strain ATCC 49188 / DSM 6882 / CCUG 24695 / JCM 21032 / LMG 3331 / NBRC 15819 / NCTC 12168 / Alc 37) (Ochrobactrum anthropi).